The chain runs to 546 residues: Carboxylic ester hydrolase FVEG_12634 (546 aa).

Residues 72–91 (FTDGTKICPQPPSSNTPDPS) form a disordered region. S214 acts as the Acyl-ester intermediate in catalysis.

It belongs to the type-B carboxylesterase/lipase family.

The catalysed reaction is a carboxylic ester + H2O = an alcohol + a carboxylate + H(+). Carboxylic ester hydrolase; part of the Fusarium detoxification of benzoxazolinone cluster 2 (FDB2) involved in the degradation of benzoxazolinones produced by the host plant. Maize, wheat, and rye produce the 2 benzoxazinone phytoanticipins 2,4-dihy-droxy-7-methoxy-1,4-benzoxazin-3-one (DIMBOA) and 2,4-dihydroxy-1,4-benzoxazin-3-one (DIBOA) that, due to their inherent instability once released, spontaneously degrade to the more stable corresponding benzoxazolinones, 6-methoxy-2-benzoxazolinone (MBOA) and 2-benzoxazolinone (BOA), respectively. The first step in the detoxification of benzoxazolinones involves the hydrolysis of the cyclic ester bond of benzoxazolinones by the FDB1 cluster gamma-lactamase MBL1 to aminophenols. MBL1 is able to convert BOA into 2-aminophenol (2-AP), as well as MBOA into 5-methoxy-2-aminophenol (2-AMP). The FDB2 cluster N-malonyltransferase FDB2/NAT1 then metabolizes aminophenols via N-malonylation to non-toxic malonamic acids. FDB2/NAT1 converts 2-AP into N-(2-hydroxyphenyl) malonamic acid (HPMA) and 2-AMP into N-(2-hydroxy-4-methoxyphenyl) malonamic acid (HMPMA). The duplicated dienlactone hydrolases DLH1 and DLH2 may provide redundant function for hydrolyzing the lactone moiety in the BOA molecule. The roles of the amidases an other enzymes encoded by the 2 FDB clusters have not been identified so far. The chain is Carboxylic ester hydrolase FVEG_12634 from Gibberella moniliformis (strain M3125 / FGSC 7600) (Maize ear and stalk rot fungus).